Reading from the N-terminus, the 947-residue chain is Bromodomain testis-specific protein (947 aa).

The Bromo 1 domain occupies 27–133 (RLTNQLQYLQ…KLFVQKLSQM (107 aa)). S187 is modified (phosphoserine). Residues 209–220 (KGVKRKADTTTP) carry the Nuclear localization signal motif. The 110-residue stretch at 267-376 (VKVTEQLRHC…DVFETHFSKI (110 aa)) folds into the Bromo 2 domain. Disordered stretches follow at residues 395 to 421 (ETTG…ERVQ), 444 to 512 (PFRK…PMNY), 610 to 690 (NNQL…VKKM), and 849 to 873 (HLEQ…GLTV). Over residues 403–413 (NEASSEGNSSG) the composition is skewed to low complexity. Positions 417–470 (DERVQRLAKLQEQLKAVHQQLQVLSQVPFRKLNKKKEKSKKEKKKEKVNNSNEN) form a coiled coil. A compositionally biased stretch (basic residues) spans 447–462 (KLNKKKEKSKKEKKKE). The segment covering 470 to 481 (NPRKMCEQMRLK) has biased composition (basic and acidic residues). Basic residues predominate over residues 482 to 494 (EKSKRNQPKKRKQ). Residues 500-582 (KSEDEDNAKP…ACLRKRPLKP (83 aa)) enclose the NET domain. Residues 631–668 (VGSVSRLSESSSSSSSSSESESSSSDLSSSDSSGSESE) are compositionally biased toward low complexity. Composition is skewed to basic and acidic residues over residues 674–690 (TEVK…VKKM) and 849–865 (HLEQ…ENQR).

This sequence belongs to the BET family. Interacts with SMARCE1. Interacts with mRNA splicing machinery proteins SRSF2, DDX5, HNRNPK and TARDBP. Interacts with the acetylated N-terminus of histone H1, H2, H3 and H4. Interacts with P-TEFb components CDK9 and CCNT1/cyclin-T1. In terms of processing, ubiquitinated in a SPOP-dependent manner, leading to proteasomal degradation.

The protein resides in the nucleus. Testis-specific chromatin protein that specifically binds histone H4 acetylated at 'Lys-5' and 'Lys-8' (H4K5ac and H4K8ac, respectively) and plays a key role in spermatogenesis. Required in late pachytene spermatocytes: plays a role in meiotic and post-meiotic cells by binding to acetylated histones at the promoter of specific meiotic and post-meiotic genes, facilitating their activation at the appropriate time. In the post-meiotic phase of spermatogenesis, binds to hyperacetylated histones and participates in their general removal from DNA. Also recognizes and binds a subset of butyrylated histones: able to bind histone H4 butyrylated at 'Lys-8' (H4K8ac), while it is not able to bind H4 butyrylated at 'Lys-5' (H4K5ac). Also acts as a component of the splicing machinery in pachytene spermatocytes and round spermatids and participates in 3'-UTR truncation of specific mRNAs in post-meiotic spermatids. Required for chromocenter organization, a structure comprised of peri-centromeric heterochromatin. This Macaca fascicularis (Crab-eating macaque) protein is Bromodomain testis-specific protein (BRDT).